A 719-amino-acid chain; its full sequence is 2'-5'-oligoadenylate synthase 2 (719 aa).

A lipid anchor (N-myristoyl glycine) is attached at glycine 2. OAS domain stretches follow at residues 11–335 and 343–683; these read VPAQ…SWNV and TPGH…WKVP. The residue at position 378 (lysine 378) is an N6-acetyllysine. Serine 396 contributes to the ATP binding site. Mg(2+) contacts are provided by aspartate 408, aspartate 410, and aspartate 481. Positions 544 and 547 each coordinate ATP.

The protein belongs to the 2-5A synthase family. As to quaternary structure, homodimer. Mg(2+) is required as a cofactor. Myristoylation is not essential for its activity. In terms of processing, glycosylated. Glycosylation is essential for its activity.

Its subcellular location is the cytoplasm. The protein localises to the perinuclear region. It carries out the reaction 3 ATP = 5'-triphosphoadenylyl-(2'-&gt;5')-adenylyl-(2'-&gt;5')-adenosine + 2 diphosphate. Its activity is regulated as follows. Produced as a latent enzyme which is activated by double stranded RNA (dsRNA) generated during the course of viral infection. The dsRNA activator must be at least 15 nucleotides long, and no modification of the 2'-hydroxyl group is tolerated. ssRNA or dsDNA do not act as activators. Strongly inhibited by copper, iron and zinc ions. Partially inhibited by cobalt and nickel ions. In terms of biological role, interferon-induced, dsRNA-activated antiviral enzyme which plays a critical role in cellular innate antiviral response. Activated by detection of double stranded RNA (dsRNA): polymerizes higher oligomers of 2'-5'-oligoadenylates (2-5A) from ATP which then bind to the inactive monomeric form of ribonuclease L (RNASEL) leading to its dimerization and subsequent activation. Activation of RNASEL leads to degradation of cellular as well as viral RNA, resulting in the inhibition of protein synthesis, thus terminating viral replication. Can mediate the antiviral effect via the classical RNASEL-dependent pathway or an alternative antiviral pathway independent of RNASEL. In addition, it may also play a role in other cellular processes such as apoptosis, cell growth, differentiation and gene regulation. May act as a negative regulator of lactation, stopping lactation in virally infected mammary gland lobules, thereby preventing transmission of viruses to neonates. Non-infected lobules would not be affected, allowing efficient pup feeding during infection. This is 2'-5'-oligoadenylate synthase 2 from Homo sapiens (Human).